We begin with the raw amino-acid sequence, 273 residues long: Protein FAM210A (273 aa).

Residues 97–106 (SSSATSSGPP) are compositionally biased toward low complexity. The segment at 97–116 (SSSATSSGPPSEKKEDPDPL) is disordered. A compositionally biased stretch (basic and acidic residues) spans 107 to 116 (SEKKEDPDPL). Residues 118-230 (DRSISLYQRF…GYMSTPPPVK (113 aa)) form the DUF1279 domain. The chain crosses the membrane as a helical span at residues 137 to 157 (VLIPVHLITSAVWFGTFYYAA). Positions 230–269 (KEYLQDKMEETKELLTEKMEETKDRLTEKLQETKGKVSLK) form a coiled coil. The disordered stretch occupies residues 247-273 (KMEETKDRLTEKLQETKGKVSLKKKVE).

The protein belongs to the FAM210 family. Interacts with ATAD3A.

The protein localises to the membrane. The protein resides in the mitochondrion. Its subcellular location is the cytoplasm. Functionally, may play a role in the structure and strength of both muscle and bone. This is Protein FAM210A (FAM210A) from Bos taurus (Bovine).